Reading from the N-terminus, the 343-residue chain is MMKKNQTMISEFLLLGLPIQPEQQNLFYALFLAVYLTTLLGNLLVIVLIRLDSHLHMPMYLCLSNLSFSDLCFSSVTMPKLLQNMQSQNPSIPFADCLAQMYFHLFYGVLESFLLVVMAYHCYVAICFPLHYTTIMSPKCCLGLLTLSWLLTTAHATLHTLLMARLSFCAENVIPHFFCDTSTLLKLACSNTQVNGWVMFFMGGLILVIPFLLLIMSCARIVSTILRVPSTGGIQKAFSTCGPHLSVVSLFYGTIIGLYLCPLTNHNTVKDTVMAVMYTGVTHMLNPFIYSLRNRDMRGNPGQSLQHKENFFVFKIVIVGILPLLNLVGVVKLIMKYHSKSVA.

Topologically, residues 1–28 are extracellular; sequence MMKKNQTMISEFLLLGLPIQPEQQNLFY. An N-linked (GlcNAc...) asparagine glycan is attached at asparagine 5. Residues 29–49 traverse the membrane as a helical segment; it reads ALFLAVYLTTLLGNLLVIVLI. The Cytoplasmic segment spans residues 50-107; the sequence is RLDSHLHMPMYLCLSNLSFSDLCFSSVTMPKLLQNMQSQNPSIPFADCLAQMYFHLFY. Cysteines 97 and 179 form a disulfide. A helical membrane pass occupies residues 108–128; it reads GVLESFLLVVMAYHCYVAICF. Residues 129-141 are Extracellular-facing; it reads PLHYTTIMSPKCC. Residues 142-162 form a helical membrane-spanning segment; sequence LGLLTLSWLLTTAHATLHTLL. The Cytoplasmic portion of the chain corresponds to 163 to 195; that stretch reads MARLSFCAENVIPHFFCDTSTLLKLACSNTQVN. The helical transmembrane segment at 196–216 threads the bilayer; the sequence is GWVMFFMGGLILVIPFLLLIM. Over 217-242 the chain is Extracellular; it reads SCARIVSTILRVPSTGGIQKAFSTCG. A helical transmembrane segment spans residues 243–263; sequence PHLSVVSLFYGTIIGLYLCPL. The Cytoplasmic portion of the chain corresponds to 264-271; that stretch reads TNHNTVKD. Residues 272 to 292 traverse the membrane as a helical segment; sequence TVMAVMYTGVTHMLNPFIYSL. At 293–310 the chain is on the extracellular side; it reads RNRDMRGNPGQSLQHKEN. The helical transmembrane segment at 311 to 331 threads the bilayer; sequence FFVFKIVIVGILPLLNLVGVV. Residues 332–343 are Cytoplasmic-facing; sequence KLIMKYHSKSVA.

The protein belongs to the G-protein coupled receptor 1 family.

The protein localises to the cell membrane. In terms of biological role, odorant receptor. The sequence is that of Olfactory receptor 1E3 (OR1E3) from Homo sapiens (Human).